A 373-amino-acid chain; its full sequence is Chaperone protein DnaJ (373 aa).

Positions 4-68 constitute a J domain; that stretch reads NYYQILGVSK…QKRAAYDRLG (65 aa). Residues 136–214 form a CR-type zinc finger; it reads GIEKNINFSS…CHGMGRYHKQ (79 aa). Zn(2+)-binding residues include Cys149, Cys152, Cys166, Cys169, Cys188, Cys191, Cys202, and Cys205. CXXCXGXG motif repeat units follow at residues 149–156, 166–173, 188–195, and 202–209; these read CNTCHGSG, CDACSGVG, CHKCQGNG, and CKKCHGMG.

It belongs to the DnaJ family. As to quaternary structure, homodimer. Zn(2+) serves as cofactor.

The protein resides in the cytoplasm. Participates actively in the response to hyperosmotic and heat shock by preventing the aggregation of stress-denatured proteins and by disaggregating proteins, also in an autonomous, DnaK-independent fashion. Unfolded proteins bind initially to DnaJ; upon interaction with the DnaJ-bound protein, DnaK hydrolyzes its bound ATP, resulting in the formation of a stable complex. GrpE releases ADP from DnaK; ATP binding to DnaK triggers the release of the substrate protein, thus completing the reaction cycle. Several rounds of ATP-dependent interactions between DnaJ, DnaK and GrpE are required for fully efficient folding. Also involved, together with DnaK and GrpE, in the DNA replication of plasmids through activation of initiation proteins. This is Chaperone protein DnaJ from Rickettsia rickettsii (strain Sheila Smith).